The sequence spans 413 residues: Glutaminase (413 aa).

The tract at residues 23–307 is glutaminase; that stretch reads GELADYIPEL…LSDDMGLHLM (285 aa). Serine 65, asparagine 114, glutamate 160, asparagine 167, tyrosine 191, tyrosine 243, and valine 261 together coordinate substrate. The STAS domain maps to 316-413; it reads AVRSITRDGD…SDGTICKERV (98 aa).

The protein belongs to the glutaminase family. Homotetramer.

The catalysed reaction is L-glutamine + H2O = L-glutamate + NH4(+). The polypeptide is Glutaminase (glsA) (Corynebacterium glutamicum (strain ATCC 13032 / DSM 20300 / JCM 1318 / BCRC 11384 / CCUG 27702 / LMG 3730 / NBRC 12168 / NCIMB 10025 / NRRL B-2784 / 534)).